A 223-amino-acid chain; its full sequence is PKHD-type hydroxylase syc1482_d (223 aa).

A Fe2OG dioxygenase domain is found at 78–176 (RVHSLLFSRY…RFACVGWVQS (99 aa)). Fe cation is bound by residues H96, D98, and H157. R167 is a 2-oxoglutarate binding site.

Requires Fe(2+) as cofactor. The cofactor is L-ascorbate.

The protein is PKHD-type hydroxylase syc1482_d of Synechococcus sp. (strain ATCC 27144 / PCC 6301 / SAUG 1402/1) (Anacystis nidulans).